The sequence spans 212 residues: Large ribosomal subunit protein uL3 (212 aa).

Positions 134–155 (RNSHGNSLSHRAPGSIGQNQSP) are disordered. N5-methylglutamine is present on glutamine 153.

The protein belongs to the universal ribosomal protein uL3 family. Part of the 50S ribosomal subunit. Forms a cluster with proteins L14 and L19. In terms of processing, methylated by PrmB.

Its function is as follows. One of the primary rRNA binding proteins, it binds directly near the 3'-end of the 23S rRNA, where it nucleates assembly of the 50S subunit. The polypeptide is Large ribosomal subunit protein uL3 (Pseudoalteromonas atlantica (strain T6c / ATCC BAA-1087)).